The chain runs to 83 residues: Delta-conotoxin-like MVIC (83 aa).

An N-terminal signal peptide occupies residues 1–22; the sequence is MKLTCVMIVAVLFLTTWTFVTA. Residues 23 to 49 constitute a propeptide that is removed on maturation; the sequence is DDSRYGLKNLFPKARHEMKNPEASKLN. Cystine bridges form between Cys54–Cys69, Cys61–Cys73, and Cys68–Cys78. Residues Pro56 and Pro65 each carry the 4-hydroxyproline modification.

It belongs to the conotoxin O1 superfamily. As to expression, expressed by the venom duct.

Its subcellular location is the secreted. Its function is as follows. Delta-conotoxins bind to site 6 of voltage-gated sodium channels (Nav) and inhibit the inactivation process. This is Delta-conotoxin-like MVIC from Conus magus (Magical cone).